We begin with the raw amino-acid sequence, 396 residues long: Acetate kinase (396 aa).

Position 7 (Asn7) interacts with Mg(2+). Lys14 is a binding site for ATP. Residue Arg88 participates in substrate binding. Asp145 (proton donor/acceptor) is an active-site residue. ATP-binding positions include 203-207, 278-280, and 326-330; these read HAGNG, DAR, and GIGEN. Residue Glu379 participates in Mg(2+) binding.

This sequence belongs to the acetokinase family. Homodimer. Mg(2+) serves as cofactor. The cofactor is Mn(2+).

The protein localises to the cytoplasm. The catalysed reaction is acetate + ATP = acetyl phosphate + ADP. The protein operates within metabolic intermediate biosynthesis; acetyl-CoA biosynthesis; acetyl-CoA from acetate: step 1/2. In terms of biological role, catalyzes the formation of acetyl phosphate from acetate and ATP. Can also catalyze the reverse reaction. The polypeptide is Acetate kinase (Phytoplasma australiense).